Here is a 161-residue protein sequence, read N- to C-terminus: Phosphopantetheine adenylyltransferase (161 aa).

Ser-11 contacts substrate. ATP-binding positions include 11–12 and His-19; that span reads SF. Substrate is bound by residues Lys-43, Leu-75, and Arg-89. ATP-binding positions include 90–92, Glu-100, and 125–131; these read GLR and YSYLSSS.

It belongs to the bacterial CoaD family. In terms of assembly, homohexamer. The cofactor is Mg(2+).

Its subcellular location is the cytoplasm. The catalysed reaction is (R)-4'-phosphopantetheine + ATP + H(+) = 3'-dephospho-CoA + diphosphate. It participates in cofactor biosynthesis; coenzyme A biosynthesis; CoA from (R)-pantothenate: step 4/5. Functionally, reversibly transfers an adenylyl group from ATP to 4'-phosphopantetheine, yielding dephospho-CoA (dPCoA) and pyrophosphate. This is Phosphopantetheine adenylyltransferase from Geobacter sp. (strain M21).